The following is a 489-amino-acid chain: Mitochondrial-processing peptidase subunit beta (489 aa).

The N-terminal 43 residues, 1–43 (MAAAAARVVLSSAARRRLWGFSESLLIRGAAGRSLYFGENRLR), are a transit peptide targeting the mitochondrion. His-101 is a binding site for Zn(2+). Glu-104 serves as the catalytic Proton acceptor. Zn(2+) is bound by residues His-105 and Glu-181.

It belongs to the peptidase M16 family. As to quaternary structure, heterodimer of PMPCA (alpha) and PMPCB (beta) subunits, forming the mitochondrial processing protease (MPP) in which PMPCA is involved in substrate recognition and binding and PMPCB is the catalytic subunit. Zn(2+) is required as a cofactor.

It is found in the mitochondrion matrix. It carries out the reaction Release of N-terminal transit peptides from precursor proteins imported into the mitochondrion, typically with Arg in position P2.. Binding to PMPCA is required for catalytic activity. Functionally, catalytic subunit of the essential mitochondrial processing protease (MPP), which cleaves the mitochondrial sequence off newly imported precursors proteins. Preferentially, cleaves after an arginine at position P2. Required for PINK1 turnover by coupling PINK1 mitochondrial import and cleavage, which results in subsequent PINK1 proteolysis. The sequence is that of Mitochondrial-processing peptidase subunit beta (PMPCB) from Homo sapiens (Human).